The sequence spans 148 residues: Caltractin (148 aa).

EF-hand domains are found at residues 4-39 (EQKQ…LGFE), 40-75 (PKKE…KMGE), 77-112 (DSRE…LGEN), and 113-148 (MTDE…TSLF). Residues Asp17, Asp19, Ser21, Thr23, Glu28, Asp53, Asp55, Ser57, Thr59, and Glu64 each coordinate Ca(2+). Ca(2+)-binding residues include Asp126, Asp128, Asp130, Glu132, and Glu137.

Belongs to the centrin family. As to expression, ubiquitous.

In terms of biological role, this calcium-binding protein is found in the basal body complexes (the functional homolog of the centrosome in animal cell). In mitotic cells it is specifically associated with the poles of the mitotic spindles at the sites of the duplicated basal body complexes. This Tetraselmis striata (Green microalga) protein is Caltractin.